The chain runs to 153 residues: 6,7-dimethyl-8-ribityllumazine synthase (153 aa).

Residues phenylalanine 21, 55 to 57 (AFE), and 79 to 81 (TVI) contribute to the 5-amino-6-(D-ribitylamino)uracil site. A (2S)-2-hydroxy-3-oxobutyl phosphate-binding site is contributed by 84–85 (AT). Residue histidine 87 is the Proton donor of the active site. Residue phenylalanine 112 coordinates 5-amino-6-(D-ribitylamino)uracil. A (2S)-2-hydroxy-3-oxobutyl phosphate-binding site is contributed by arginine 126.

The protein belongs to the DMRL synthase family. In terms of assembly, forms an icosahedral capsid composed of 60 subunits, arranged as a dodecamer of pentamers.

The enzyme catalyses (2S)-2-hydroxy-3-oxobutyl phosphate + 5-amino-6-(D-ribitylamino)uracil = 6,7-dimethyl-8-(1-D-ribityl)lumazine + phosphate + 2 H2O + H(+). It participates in cofactor biosynthesis; riboflavin biosynthesis; riboflavin from 2-hydroxy-3-oxobutyl phosphate and 5-amino-6-(D-ribitylamino)uracil: step 1/2. Functionally, catalyzes the formation of 6,7-dimethyl-8-ribityllumazine by condensation of 5-amino-6-(D-ribitylamino)uracil with 3,4-dihydroxy-2-butanone 4-phosphate. This is the penultimate step in the biosynthesis of riboflavin. In Bacillus cereus (strain ATCC 10987 / NRS 248), this protein is 6,7-dimethyl-8-ribityllumazine synthase.